The chain runs to 88 residues: uncharacterized protein (88 aa).

The disordered stretch occupies residues 1–88 (MPHLPELSKQ…IRRGNPSGVA (88 aa)). The span at 21-65 (YRAKGEDLENSHHNNESRLAEGVHYDRNKAPALQEREKASTEKVN) shows a compositional bias: basic and acidic residues.

Its function is as follows. Involved in osmoadaptation. This is an uncharacterized protein from Emericella nidulans (strain FGSC A4 / ATCC 38163 / CBS 112.46 / NRRL 194 / M139) (Aspergillus nidulans).